The sequence spans 71 residues: Disintegrin simusmin (71 aa).

The Disintegrin domain maps to alanine 1–histidine 71. 6 disulfides stabilise this stretch: cysteine 5/cysteine 20, cysteine 7/cysteine 15, cysteine 14/cysteine 37, cysteine 28/cysteine 34, cysteine 33/cysteine 58, and cysteine 46/cysteine 65. The short motif at arginine 50–aspartate 52 is the Cell attachment site element.

It belongs to the venom metalloproteinase (M12B) family. P-II subfamily. P-IIa sub-subfamily. Monomer. As to expression, expressed by the venom gland.

It is found in the secreted. Its function is as follows. Inhibits ADP- (IC(50)=56 nM) and collagen-induced (IC(50)=49 nM) aggregation of human platelets. In vitro, inhibits adhesion of endothelial cells to vitronectin, type-I collagen and, to a lower degree, fibronectin and laminin. The sequence is that of Disintegrin simusmin from Crotalus simus (Central American rattlesnake).